Reading from the N-terminus, the 632-residue chain is Extracellular metalloproteinase 2 (632 aa).

The first 19 residues, 1 to 19, serve as a signal peptide directing secretion; that stretch reads MHGLLLAGLAAALPLGVAG. The propeptide occupies 20–244; the sequence is LPARQQSGLS…VHNVVDYVAS (225 aa). Residue asparagine 270 is glycosylated (N-linked (GlcNAc...) asparagine). Histidine 429 contacts Zn(2+). Residue glutamate 430 is part of the active site. Histidine 433 is a Zn(2+) binding site.

This sequence belongs to the peptidase M36 family. Requires Zn(2+) as cofactor.

The protein localises to the secreted. Secreted metalloproteinase probably acting as a virulence factor. This Trichophyton rubrum (Athlete's foot fungus) protein is Extracellular metalloproteinase 2 (MEP2).